A 248-amino-acid chain; its full sequence is Cell division protein FtsQ (248 aa).

Over Met1–Arg4 the chain is Cytoplasmic. Residues Leu5–Leu25 form a helical membrane-spanning segment. The Periplasmic segment spans residues Arg26–Arg248. In terms of domain architecture, POTRA spans Leu32–Tyr101.

It belongs to the FtsQ/DivIB family. FtsQ subfamily. In terms of assembly, part of a complex composed of FtsB, FtsL and FtsQ.

The protein resides in the cell inner membrane. Its function is as follows. Essential cell division protein. May link together the upstream cell division proteins, which are predominantly cytoplasmic, with the downstream cell division proteins, which are predominantly periplasmic. May control correct divisome assembly. The protein is Cell division protein FtsQ of Allochromatium vinosum (strain ATCC 17899 / DSM 180 / NBRC 103801 / NCIMB 10441 / D) (Chromatium vinosum).